The following is a 458-amino-acid chain: PH domain-containing protein DDB_G0274775 (458 aa).

The region spanning 15–112 is the PH domain; sequence PSDREGWLTK…WMESIKRNLD (98 aa). Residues 111–154 form a disordered region; it reads LDGEGGMKSGGNDIVSSPKINSEPTPKVNQNGSAPEKSSLSSPR. Over residues 124–142 the composition is skewed to polar residues; the sequence is IVSSPKINSEPTPKVNQNG. Low complexity predominate over residues 143–154; it reads SAPEKSSLSSPR.

The sequence is that of PH domain-containing protein DDB_G0274775 from Dictyostelium discoideum (Social amoeba).